We begin with the raw amino-acid sequence, 316 residues long: Ribosomal RNA small subunit methyltransferase H (316 aa).

S-adenosyl-L-methionine is bound by residues 35 to 37 (SGH), aspartate 55, phenylalanine 84, aspartate 105, and glutamine 112.

This sequence belongs to the methyltransferase superfamily. RsmH family.

Its subcellular location is the cytoplasm. It catalyses the reaction cytidine(1402) in 16S rRNA + S-adenosyl-L-methionine = N(4)-methylcytidine(1402) in 16S rRNA + S-adenosyl-L-homocysteine + H(+). Functionally, specifically methylates the N4 position of cytidine in position 1402 (C1402) of 16S rRNA. The polypeptide is Ribosomal RNA small subunit methyltransferase H (Streptococcus equi subsp. zooepidemicus (strain H70)).